Here is a 249-residue protein sequence, read N- to C-terminus: Formylaminopyrimidine import ATP-binding protein ThiZ (249 aa).

One can recognise an ABC transporter domain in the interval 6–228; the sequence is LTFEEVSFAY…RRKMETTEKM (223 aa). Position 39–46 (39–46) interacts with ATP; sequence AKSGSGKS.

This sequence belongs to the ABC transporter superfamily. As to quaternary structure, the complex is likely composed of an ATP-binding protein (ThiZ), a transmembrane protein (ThiX) and a solute-binding protein (ThiY).

It is found in the cell membrane. It participates in cofactor biosynthesis; thiamine diphosphate biosynthesis. Participates in a thiamine pyrimidine salvage pathway as part of the ABC transporter complex ThiXYZ involved in the import of thiamine degradation products such as the formylaminopyrimidine N-formyl-4-amino-5-aminomethyl-2-methylpyrimidine (FAMP). Is likely responsible for energy coupling to the transport system. The sequence is that of Formylaminopyrimidine import ATP-binding protein ThiZ from Halalkalibacterium halodurans (strain ATCC BAA-125 / DSM 18197 / FERM 7344 / JCM 9153 / C-125) (Bacillus halodurans).